A 1087-amino-acid polypeptide reads, in one-letter code: Fanconi-associated nuclease 1 homolog (1087 aa).

Disordered stretches follow at residues Met-1–Lys-79, Phe-104–Leu-154, Glu-169–Thr-202, Thr-459–Ile-486, Ile-816–Asn-835, and Ser-842–Ile-871. The segment covering Thr-41 to Lys-79 has biased composition (low complexity). A compositionally biased stretch (polar residues) spans Phe-104 to Ile-115. Composition is skewed to low complexity over residues Lys-118 to Leu-154, Asn-182 to Thr-202, and Asn-467 to Asn-485. Coiled coils occupy residues Trp-419–Asp-490 and Lys-830–Ile-874. The span at Glu-848 to Ile-871 shows a compositional bias: acidic residues. Glu-899, Asp-1023, Glu-1051, and Val-1052 together coordinate Mn(2+). The VRR-NUC domain maps to Asp-961–Lys-1083.

This sequence belongs to the FAN1 family. Mn(2+) serves as cofactor. The cofactor is Mg(2+).

The enzyme catalyses Hydrolytically removes 5'-nucleotides successively from the 3'-hydroxy termini of 3'-hydroxy-terminated oligonucleotides.. Nuclease required for the repair of DNA interstrand cross-links (ICL). Acts as a 5'-3' exonuclease that anchors at a cut end of DNA and cleaves DNA successively at every third nucleotide, allowing to excise an ICL from one strand through flanking incisions. This Dictyostelium discoideum (Social amoeba) protein is Fanconi-associated nuclease 1 homolog (mtmr15).